The following is a 1434-amino-acid chain: Probable ATP-dependent RNA helicase spindle-E (1434 aa).

A Helicase ATP-binding domain is found at 126-295 (INAINENPVV…FANESSAPPV (170 aa)). ATP is bound at residue 139 to 146 (GETGCGKT). Residues 241–244 (DEVH) carry the DEAH box motif. One can recognise a Helicase C-terminal domain in the interval 356 to 527 (TGKSYNQSLR…NCVLKAKELK (172 aa)). In terms of domain architecture, Tudor spans 936 to 999 (AGAITKGLML…RLMSQDLLRH (64 aa)).

Belongs to the DEAD box helicase family. DEAH subfamily.

The protein localises to the cytoplasm. It catalyses the reaction ATP + H2O = ADP + phosphate + H(+). In terms of biological role, probable ATP-binding RNA helicase which plays a central role during spermatogenesis and oogenesis by repressing transposable elements and preventing their mobilization, which is essential for the germline integrity. Acts via the piRNA metabolic process, which mediates the repression of transposable elements during meiosis by forming complexes composed of piRNAs and Piwi and govern the methylation and subsequent repression of transposons. Involved in the repression of LTR retrotransposon copia. Also involved in telomere regulation by repressing specialized telomeric retroelements HeT-A, TAHRE, and TART; Drosophila telomeres being maintained by transposition of specialized telomeric retroelements. Involved in telomeric trans-silencing, a repression mechanism by which a transposon or a transgene inserted in subtelomeric heterochromatin has the capacity to repress in trans in the female germline, a homologous transposon, or transgene located in euchromatin. Involved in the repression of testis-expressed Stellate genes by the homologous Su(Ste) repeats. Required for anteroposterior and dorsoventral axis formation during oogenesis. The sequence is that of Probable ATP-dependent RNA helicase spindle-E (spn-E) from Drosophila persimilis (Fruit fly).